The chain runs to 156 residues: Small ribosomal subunit protein uS7 (156 aa).

The protein belongs to the universal ribosomal protein uS7 family. In terms of assembly, part of the 30S ribosomal subunit. Contacts proteins S9 and S11.

Its function is as follows. One of the primary rRNA binding proteins, it binds directly to 16S rRNA where it nucleates assembly of the head domain of the 30S subunit. Is located at the subunit interface close to the decoding center, probably blocks exit of the E-site tRNA. This Desulfatibacillum aliphaticivorans protein is Small ribosomal subunit protein uS7.